Reading from the N-terminus, the 595-residue chain is Miltiradiene synthase KSL1, chloroplastic (595 aa).

The N-terminal 47 residues, 1–47, are a transit peptide targeting the chloroplast; that stretch reads MSLAFNPAATAFSGNGARSRRENFPVKHVTVRGFPMITNKSSFAVKC. Mg(2+)-binding residues include aspartate 334, aspartate 338, asparagine 478, and glutamate 486. Residues 334 to 338 carry the DDXXD motif motif; it reads DDFFD.

It belongs to the terpene synthase family. Mg(2+) is required as a cofactor.

It is found in the plastid. It localises to the chloroplast. The enzyme catalyses (+)-copalyl diphosphate = miltiradiene + diphosphate. It participates in secondary metabolite biosynthesis; terpenoid biosynthesis. Functionally, involved in tanshinone biosynthesis in hairy roots. Catalyzes the conversion of copalyl diphosphate (CPP) to miltiradiene. The sequence is that of Miltiradiene synthase KSL1, chloroplastic from Salvia miltiorrhiza (Chinese sage).